A 221-amino-acid chain; its full sequence is Nuclear phosphoprotein UL3 homolog (221 aa).

It belongs to the alphaherpesvirinae HHV-1 UL3 family. Post-translationally, phosphorylated.

It is found in the host nucleus. The chain is Nuclear phosphoprotein UL3 homolog from Varicella-zoster virus (strain Oka vaccine) (HHV-3).